The primary structure comprises 500 residues: Lysine--tRNA ligase (500 aa).

Glutamate 410 and glutamate 417 together coordinate Mg(2+).

The protein belongs to the class-II aminoacyl-tRNA synthetase family. In terms of assembly, homodimer. It depends on Mg(2+) as a cofactor.

It is found in the cytoplasm. It catalyses the reaction tRNA(Lys) + L-lysine + ATP = L-lysyl-tRNA(Lys) + AMP + diphosphate. This Shewanella frigidimarina (strain NCIMB 400) protein is Lysine--tRNA ligase.